The following is a 24-amino-acid chain: Brevinin-1Bd (24 aa).

The cysteines at positions 18 and 24 are disulfide-linked.

Expressed by the skin glands.

It is found in the secreted. Functionally, antibacterial activity against Gram-positive bacterium S.aureus and Gram-negative bacterium E.coli. Has activity against C.albicans. In Lithobates berlandieri (Rio Grande leopard frog), this protein is Brevinin-1Bd.